A 134-amino-acid polypeptide reads, in one-letter code: Large ribosomal subunit protein uL16 (134 aa).

The segment covering 1–20 has biased composition (basic residues); the sequence is MLLQPKRTKFRKMHKGRNRG. Residues 1–21 are disordered; that stretch reads MLLQPKRTKFRKMHKGRNRGT.

The protein belongs to the universal ribosomal protein uL16 family. As to quaternary structure, part of the 50S ribosomal subunit.

Binds 23S rRNA and is also seen to make contacts with the A and possibly P site tRNAs. The chain is Large ribosomal subunit protein uL16 from Blochmanniella pennsylvanica (strain BPEN).